Reading from the N-terminus, the 122-residue chain is Yop proteins translocation protein X (122 aa).

Residues 71–87 (HRAQDYRRELDTLQSLL) are a coiled coil.

As to quaternary structure, interacts with YscY.

The protein resides in the secreted. Functionally, required for Yop secretion. This Yersinia enterocolitica serotype O:8 / biotype 1B (strain NCTC 13174 / 8081) protein is Yop proteins translocation protein X (yscX).